The chain runs to 199 residues: Recombination protein RecR (199 aa).

The segment at 57-72 (CEICGNMDTENICRIC) adopts a C4-type zinc-finger fold. The Toprim domain occupies 80–175 (SVIAIVETVA…KISRLASGIP (96 aa)).

The protein belongs to the RecR family.

Functionally, may play a role in DNA repair. It seems to be involved in an RecBC-independent recombinational process of DNA repair. It may act with RecF and RecO. This is Recombination protein RecR from Rickettsia canadensis (strain McKiel).